The sequence spans 169 residues: Putative phosphoesterase SSP1770 (169 aa).

The active-site Proton donor is His34. 2 short sequence motifs (HXTX) span residues 34–37 (HITI) and 115–118 (HFTI). His115 functions as the Proton acceptor in the catalytic mechanism.

It belongs to the 2H phosphoesterase superfamily. YjcG family.

The chain is Putative phosphoesterase SSP1770 from Staphylococcus saprophyticus subsp. saprophyticus (strain ATCC 15305 / DSM 20229 / NCIMB 8711 / NCTC 7292 / S-41).